Here is an 866-residue protein sequence, read N- to C-terminus: Glycoprotein gp2 (866 aa).

An N-terminal signal peptide occupies residues 1 to 25 (MGFIYARKLLLCMAVSIYAIGSTTT). Disordered stretches follow at residues 24-185 (TTTE…TDTT) and 319-619 (TAAT…IVPQ). N-linked (GlcNAc...) asparagine; by host glycosylation occurs at Asn-48. The segment covering 319-442 (TAATTTAATT…PDSSTGSTST (124 aa)) has biased composition (low complexity). Residues 443–463 (AEPSSTFTLTPSTATPSTDQF) are compositionally biased toward polar residues. 2 stretches are compositionally biased toward low complexity: residues 464–499 (TGSSASTESDSTDSSTVPTTGTESITESSSTTEAST) and 514–526 (TPDGNTTSGNTTP). Asn-518 carries an N-linked (GlcNAc...) asparagine; by host glycan. Residues 535-561 (FADTQQTPDNGVSTQHTTINDHTTANA) are compositionally biased toward polar residues. The segment covering 564–574 (HAGHHRGRAGG) has biased composition (basic residues). Asn-611 and Asn-659 each carry an N-linked (GlcNAc...) asparagine; by host glycan. The helical transmembrane segment at 835–855 (FALVAATTLTVTILCLLCCLY) threads the bilayer.

The protein localises to the virion membrane. Its function is as follows. Virulence factor. The sequence is that of Glycoprotein gp2 from Equus caballus (Horse).